The sequence spans 765 residues: 1,4-alpha-glucan branching enzyme GlgB (765 aa).

Aspartate 431 functions as the Nucleophile in the catalytic mechanism. The active-site Proton donor is glutamate 484.

The protein belongs to the glycosyl hydrolase 13 family. GlgB subfamily. Monomer.

The catalysed reaction is Transfers a segment of a (1-&gt;4)-alpha-D-glucan chain to a primary hydroxy group in a similar glucan chain.. It functions in the pathway glycan biosynthesis; glycogen biosynthesis. Its function is as follows. Catalyzes the formation of the alpha-1,6-glucosidic linkages in glycogen by scission of a 1,4-alpha-linked oligosaccharide from growing alpha-1,4-glucan chains and the subsequent attachment of the oligosaccharide to the alpha-1,6 position. This is 1,4-alpha-glucan branching enzyme GlgB from Synechococcus sp. (strain CC9605).